Consider the following 1054-residue polypeptide: Kinesin-like protein KIN-7G (1054 aa).

The Kinesin motor domain maps to 17 to 341 (KIFVSVRLRP…LLFASCAKEV (325 aa)). 105–112 (GQTSSGKT) contacts ATP. Coiled coils occupy residues 350–425 (VMSD…IGEA) and 611–640 (TETA…VSSV). 2 disordered regions span residues 600 to 648 (CEPE…KEKS) and 740 to 760 (ERAE…PKHI). Residues 613-631 (TAEEKEEKEETEEKEEEEE) show a composition bias toward acidic residues.

The protein belongs to the TRAFAC class myosin-kinesin ATPase superfamily. Kinesin family. KIN-7 subfamily.

This chain is Kinesin-like protein KIN-7G, found in Arabidopsis thaliana (Mouse-ear cress).